We begin with the raw amino-acid sequence, 191 residues long: dTTP/UTP pyrophosphatase (191 aa).

The active-site Proton acceptor is the aspartate 68.

It belongs to the Maf family. YhdE subfamily. The cofactor is a divalent metal cation.

The protein resides in the cytoplasm. It carries out the reaction dTTP + H2O = dTMP + diphosphate + H(+). It catalyses the reaction UTP + H2O = UMP + diphosphate + H(+). Nucleoside triphosphate pyrophosphatase that hydrolyzes dTTP and UTP. May have a dual role in cell division arrest and in preventing the incorporation of modified nucleotides into cellular nucleic acids. This is dTTP/UTP pyrophosphatase from Thermoanaerobacter pseudethanolicus (strain ATCC 33223 / 39E) (Clostridium thermohydrosulfuricum).